The primary structure comprises 540 residues: Chaperonin GroEL 4 (540 aa).

Residues 29 to 32 (TLGP), 86 to 90 (DGTTT), glycine 413, 477 to 479 (NAA), and aspartate 493 each bind ATP.

It belongs to the chaperonin (HSP60) family. In terms of assembly, forms a cylinder of 14 subunits composed of two heptameric rings stacked back-to-back. Interacts with the co-chaperonin GroES.

Its subcellular location is the cytoplasm. It catalyses the reaction ATP + H2O + a folded polypeptide = ADP + phosphate + an unfolded polypeptide.. In terms of biological role, together with its co-chaperonin GroES, plays an essential role in assisting protein folding. The GroEL-GroES system forms a nano-cage that allows encapsulation of the non-native substrate proteins and provides a physical environment optimized to promote and accelerate protein folding. The protein is Chaperonin GroEL 4 of Frankia casuarinae (strain DSM 45818 / CECT 9043 / HFP020203 / CcI3).